The chain runs to 75 residues: uncharacterized protein (75 aa).

This is an uncharacterized protein from Enterobacteria phage T4 (Bacteriophage T4).